Here is a 407-residue protein sequence, read N- to C-terminus: Putative replication protein A (407 aa).

It belongs to the ParA family.

This is Putative replication protein A from Sinorhizobium fredii (strain NBRC 101917 / NGR234).